A 461-amino-acid chain; its full sequence is GTPase Der (461 aa).

2 EngA-type G domains span residues 9–171 (KTIA…DLNQ) and 200–371 (IQVG…ECFS). Residues 15 to 22 (GQPNVGKS), 62 to 66 (DTGGM), 123 to 126 (NKID), 206 to 213 (GRVNVGKS), 253 to 257 (DTAGI), and 317 to 320 (NKWD) each bind GTP. Residues 372–456 (KRIPTSLLNS…PLILNAKDKK (85 aa)) enclose the KH-like domain.

It belongs to the TRAFAC class TrmE-Era-EngA-EngB-Septin-like GTPase superfamily. EngA (Der) GTPase family. As to quaternary structure, associates with the 50S ribosomal subunit.

Functionally, GTPase that plays an essential role in the late steps of ribosome biogenesis. This Helicobacter pylori (strain Shi470) protein is GTPase Der.